We begin with the raw amino-acid sequence, 119 residues long: MHDFCFTIPYGMLLIGGGFIGYMKKGSITSFAGGAGTGLLLILAGYISLKAFEKKKNSTIAMVLQTVIAAALTLVMGQRYLLTGKIMPAGLVAGISALMTCFYVYKIATGGNKFPAKAE.

Helical transmembrane passes span 27–47 (SITS…AGYI), 57–77 (NSTI…LVMG), and 84–104 (GKIM…CFYV).

It belongs to the TMEM14 family.

The protein resides in the membrane. In terms of biological role, may be involved in free fatty acids export. In Arabidopsis thaliana (Mouse-ear cress), this protein is Protein FATTY ACID EXPORT 6.